A 125-amino-acid polypeptide reads, in one-letter code: Protein ApaG (125 aa).

One can recognise an ApaG domain in the interval 3–125 (TAVTEGIEVT…FPLVVPGTLN (123 aa)).

The protein is Protein ApaG of Anaeromyxobacter sp. (strain K).